The primary structure comprises 230 residues: Large ribosomal subunit protein uL1 (230 aa).

Belongs to the universal ribosomal protein uL1 family. As to quaternary structure, part of the 50S ribosomal subunit.

Binds directly to 23S rRNA. The L1 stalk is quite mobile in the ribosome, and is involved in E site tRNA release. Its function is as follows. Protein L1 is also a translational repressor protein, it controls the translation of the L11 operon by binding to its mRNA. The protein is Large ribosomal subunit protein uL1 of Methylobacillus flagellatus (strain ATCC 51484 / DSM 6875 / VKM B-1610 / KT).